We begin with the raw amino-acid sequence, 295 residues long: MNVQTMILTLQSFWAKQNCIILNAYDTEKGAGTMSPHTLLRTIGPEPWNVAYVEPSRRPADGRYGENPNRLYQHHQFQVIMKPSPLNIQELYLDSLRALGIDPLKHDIRFVEDNWENPTLGCAGLGWEVWLDGMEITQFTYFQQVGGMEANPVSAEITYGLERLATYIQDKENVFDLEWVEGFTYGDIFLQPEYEHSTYTFEVSNVDMLFDLFSTYEKEAERALARDLVFPAYDYILKCSHSFNLLDARGAISVTERTGYIARVRTLARKAARKYYEEREKLGFPMLKKEDAHDE.

The protein belongs to the class-II aminoacyl-tRNA synthetase family. In terms of assembly, tetramer of two alpha and two beta subunits.

The protein resides in the cytoplasm. The enzyme catalyses tRNA(Gly) + glycine + ATP = glycyl-tRNA(Gly) + AMP + diphosphate. The protein is Glycine--tRNA ligase alpha subunit of Shouchella clausii (strain KSM-K16) (Alkalihalobacillus clausii).